The sequence spans 341 residues: MRLCLIPQNTGTPQRVLPPVVWSPPSRKKPMLSACNSMMFGHLSPVRIPHLRGKFNLQLPSLDEQVIPARLPKMEVRAEEPKEATEVKDQVETQGQEDNKRGPCSNGEAASTSSLLETQGNLTSSWYNPRPLEGNVHLKSLIEKNQTDKAQVHAVSFYSKDHEVASSHSPAGGILSFGKPDPLPTVLPAPVPGCSLWPEKAALKVLGKDHLPSSPGLLMVGEDMQPKDPAALGSSRSSPSRAASHSSHKRKLSEPPLQLQPTPPLQLKWDRDEGPPPAKFPCLSPEALLVSQASQREGRLQQGNMCKNMRVLSRTSKFRRLRELLRRRKKRRQGRCGSSHL.

Basic and acidic residues predominate over residues 75-101 (EVRAEEPKEATEVKDQVETQGQEDNKR). 2 disordered regions span residues 75 to 115 (EVRA…TSSL) and 216 to 278 (GLLM…PPPA). A compositionally biased stretch (low complexity) spans 234–245 (SSRSSPSRAASH).

It belongs to the UPF0607 family.

The protein is Putative UPF0607 protein ENSP00000383783 of Homo sapiens (Human).